A 39-amino-acid polypeptide reads, in one-letter code: Pro-opiomelanocortin (39 aa).

Serine 1 is modified (N-acetylserine). The residue at position 13 (valine 13) is a Valine amide. Serine 31 carries the phosphoserine modification.

The protein belongs to the POMC family.

It is found in the secreted. Precursor protein for pituitary hormones that regulate stress and environmental adaptation. Functionally, stimulates the adrenal glands to release cortisol. In terms of biological role, anorexigenic peptide. Increases the pigmentation of skin by increasing melanin production in melanocytes. The polypeptide is Pro-opiomelanocortin (POMC) (Balaenoptera borealis (Sei whale)).